The chain runs to 192 residues: Fe/S biogenesis protein NfuA (192 aa).

The [4Fe-4S] cluster site is built by Cys-149 and Cys-152.

The protein belongs to the NfuA family. As to quaternary structure, homodimer. [4Fe-4S] cluster is required as a cofactor.

Involved in iron-sulfur cluster biogenesis. Binds a 4Fe-4S cluster, can transfer this cluster to apoproteins, and thereby intervenes in the maturation of Fe/S proteins. Could also act as a scaffold/chaperone for damaged Fe/S proteins. The protein is Fe/S biogenesis protein NfuA of Shewanella denitrificans (strain OS217 / ATCC BAA-1090 / DSM 15013).